A 920-amino-acid chain; its full sequence is Anoctamin-4 (920 aa).

The Cytoplasmic segment spans residues 1 to 323; sequence METSSSGITN…LYFAWLGWYT (323 aa). Residues 38–64 form a disordered region; sequence KDDDSLLHPGNLTSTSDDASRLEAGGE. The chain crosses the membrane as a helical span at residues 324–344; that stretch reads GMLFPAAFIGLFVFLYGVITL. The Extracellular portion of the chain corresponds to 345–389; that stretch reads DHCQVSKEVCQATDIIMCPVCDKYCPFMRLSDSCVYAKVTHLFDN. A helical transmembrane segment spans residues 390–410; the sequence is GATVFFAVFMAVWATVFLEFW. Residues 411–470 are Cytoplasmic-facing; the sequence is KRRRAVIAYDWDLIDWEEEEEEIRPQFEAKYSKKERMNPISGKPEPYQAFADKCSRLIVS. A helical transmembrane segment spans residues 471 to 491; it reads ASGIFFMICVVIAAVFGIVIY. Residues 492 to 512 are Extracellular-facing; sequence RVVTVSTFAAFKWALIRNNSQ. N509 carries N-linked (GlcNAc...) asparagine glycosylation. The chain crosses the membrane as a helical span at residues 513 to 533; that stretch reads VATTGTAVCINFCIIMLLNVL. The Cytoplasmic portion of the chain corresponds to 534–560; that stretch reads YEKVALLLTNLEQPRTESEWENSFTLK. A helical membrane pass occupies residues 561-581; that stretch reads MFLFQFVNLNSSTFYIAFFLG. The Extracellular portion of the chain corresponds to 582 to 680; the sequence is RFTGHPGAYL…AYGLFDEYLE (99 aa). A helical membrane pass occupies residues 681–701; it reads MILQFGFTTIFVAAFPLAPLL. The Cytoplasmic segment spans residues 702-733; it reads ALLNNIIEIRLDAYKFVTQWRRPLASRAKDIG. The helical transmembrane segment at 734-754 threads the bilayer; it reads IWYGILEGIGILSVITNAFVI. At 755-850 the chain is on the extracellular side; that stretch reads AITSDFIPRL…QFWHVLAARL (96 aa). N789 and N802 each carry an N-linked (GlcNAc...) asparagine glycan. Residues 851–871 form a helical membrane-spanning segment; sequence AFIIVFEHLVFCIKHLISYLI. The Cytoplasmic portion of the chain corresponds to 872-920; that stretch reads PDLPKDLRDRMRREKYLIQEMMYEAELERLQKERKERKKNGKAHHNEWP.

It belongs to the anoctamin family.

The protein resides in the cell membrane. It catalyses the reaction a 1,2-diacyl-sn-glycero-3-phospho-L-serine(in) = a 1,2-diacyl-sn-glycero-3-phospho-L-serine(out). The catalysed reaction is a beta-D-galactosyl-(1&lt;-&gt;1')-N-acylsphing-4-enine(out) = a beta-D-galactosyl-(1&lt;-&gt;1')-N-acylsphing-4-enine(in). The enzyme catalyses a 1,2-diacyl-sn-glycero-3-phosphocholine(in) = a 1,2-diacyl-sn-glycero-3-phosphocholine(out). Functionally, has calcium-dependent phospholipid scramblase activity; scrambles phosphatidylserine, phosphatidylcholine and galactosylceramide. Does not exhibit calcium-activated chloride channel (CaCC) activity. In Bos taurus (Bovine), this protein is Anoctamin-4.